We begin with the raw amino-acid sequence, 250 residues long: Methylthioribulose-1-phosphate dehydratase (250 aa).

Substrate is bound at residue cysteine 103. Residues histidine 121 and histidine 123 each coordinate Zn(2+). The active-site Proton donor/acceptor is glutamate 146. Histidine 211 lines the Zn(2+) pocket.

Belongs to the aldolase class II family. MtnB subfamily. The cofactor is Zn(2+).

Its subcellular location is the cytoplasm. The enzyme catalyses 5-(methylsulfanyl)-D-ribulose 1-phosphate = 5-methylsulfanyl-2,3-dioxopentyl phosphate + H2O. It participates in amino-acid biosynthesis; L-methionine biosynthesis via salvage pathway; L-methionine from S-methyl-5-thio-alpha-D-ribose 1-phosphate: step 2/6. Functionally, catalyzes the dehydration of methylthioribulose-1-phosphate (MTRu-1-P) into 2,3-diketo-5-methylthiopentyl-1-phosphate (DK-MTP-1-P). The chain is Methylthioribulose-1-phosphate dehydratase from Clavispora lusitaniae (strain ATCC 42720) (Yeast).